The sequence spans 434 residues: Putative nuclease OPG089 (434 aa).

The Mg(2+) site is built by D33, D74, E168, D170, D196, and D198.

The protein belongs to the XPG/RAD2 endonuclease family. FEN1 subfamily. Mg(2+) is required as a cofactor.

Its subcellular location is the virion. In terms of biological role, putative nuclease that seems to be required for double-strand break repair, homologous recombination, and production of full-length viral genomic DNA. This Homo sapiens (Human) protein is Putative nuclease OPG089 (OPG089).